Reading from the N-terminus, the 593-residue chain is Glyoxylate carboligase (593 aa).

This sequence belongs to the TPP enzyme family. As to quaternary structure, homotetramer. Requires Mg(2+) as cofactor. Thiamine diphosphate serves as cofactor.

The enzyme catalyses 2 glyoxylate + H(+) = 2-hydroxy-3-oxopropanoate + CO2. The protein operates within organic acid metabolism; glycolate degradation; 3-phospho-D-glycerate from glycolate: step 2/4. Its function is as follows. Catalyzes the condensation of two molecules of glyoxylate to give 2-hydroxy-3-oxopropanoate (also termed tartronate semialdehyde). The chain is Glyoxylate carboligase (gcl) from Escherichia coli O157:H7.